The chain runs to 161 residues: MTKLKIKTDKPLTTAVLTSKKLTVKAPREKIDSASKFYATGKRKNAIARVWLKVGKGKIVVNKKTIDQYFSSETYVKTILQPFVLTKTIDQYDVICTVRGGGISGQKGAILHGISKALDKSAPDFHAMLRKGGLLTRDSRVVERKKYGQRKARKKTQFSKR.

This sequence belongs to the universal ribosomal protein uS9 family.

This chain is Small ribosomal subunit protein uS9, found in Rickettsia canadensis (strain McKiel).